A 391-amino-acid polypeptide reads, in one-letter code: Immunoglobulin heavy constant alpha 2 (391 aa).

Topologically, residues 1–357 (ASPTSPKVFP…TPGANLWPTT (357 aa)) are extracellular. 3 consecutive Ig-like domains span residues 6–98 (PKVF…QDVT), 112–207 (PRLS…ANIT), and 215–317 (PEVH…KTID). The cysteines at positions 26 and 85 are disulfide-linked. Asn47 carries an N-linked (GlcNAc...) asparagine glycan. Asn92 carries an N-linked (GlcNAc...) (complex) asparagine glycan. 2 disulfide bridges follow: Cys110–Cys167 and Cys134–Cys191. Residue Asn131 is glycosylated (N-linked (GlcNAc...) asparagine). A glycan (N-linked (GlcNAc...) (complex) asparagine) is linked at Asn205. Residues Cys237 and Cys300 are joined by a disulfide bond. The N-linked (GlcNAc...) (complex) asparagine glycan is linked to Asp327. The helical transmembrane segment at 358–379 (ITFLTLFLLSLFYSTALTVTSV) threads the bilayer. Over 380-391 (RGPSGKREGPQY) the chain is Cytoplasmic.

Immunoglobulins are composed of two identical heavy chains and two identical light chains; disulfide-linked. Monomeric or polymeric. Part of the secretory IgA (sIgA) complex that consists of two, four or five IgA monomers, and two additional non-Ig polypeptides, namely the JCHAIN and the secretory component (the proteolytic product of PIGR).

It is found in the secreted. The protein resides in the cell membrane. Constant region of immunoglobulin heavy chains. Immunoglobulins, also known as antibodies, are membrane-bound or secreted glycoproteins produced by B lymphocytes. In the recognition phase of humoral immunity, the membrane-bound immunoglobulins serve as receptors which, upon binding of a specific antigen, trigger the clonal expansion and differentiation of B lymphocytes into immunoglobulins-secreting plasma cells. Secreted immunoglobulins mediate the effector phase of humoral immunity, which results in the elimination of bound antigens. The antigen binding site is formed by the variable domain of one heavy chain, together with that of its associated light chain. Thus, each immunoglobulin has two antigen binding sites with remarkable affinity for a particular antigen. The variable domains are assembled by a process called V-(D)-J rearrangement and can then be subjected to somatic hypermutations which, after exposure to antigen and selection, allow affinity maturation for a particular antigen. Ig alpha is the major immunoglobulin class in body secretions. This Homo sapiens (Human) protein is Immunoglobulin heavy constant alpha 2.